We begin with the raw amino-acid sequence, 404 residues long: Glucose-1-phosphate adenylyltransferase (404 aa).

Residues Tyr99, Gly164, 179 to 180, and Ser197 contribute to the alpha-D-glucose 1-phosphate site; that span reads EK.

Belongs to the bacterial/plant glucose-1-phosphate adenylyltransferase family.

The enzyme catalyses alpha-D-glucose 1-phosphate + ATP + H(+) = ADP-alpha-D-glucose + diphosphate. Its pathway is glycan biosynthesis; glycogen biosynthesis. Its function is as follows. Involved in the biosynthesis of ADP-glucose, a building block, required in the biosynthesis of maltose-1-phosphate (M1P) and in the elongation reactions to produce linear alpha-1,4-glucans. Catalyzes the reaction between ATP and alpha-D-glucose 1-phosphate (G1P) to produce pyrophosphate and ADP-Glc. The protein is Glucose-1-phosphate adenylyltransferase of Mycolicibacterium vanbaalenii (strain DSM 7251 / JCM 13017 / BCRC 16820 / KCTC 9966 / NRRL B-24157 / PYR-1) (Mycobacterium vanbaalenii).